A 355-amino-acid chain; its full sequence is Homoserine O-succinyltransferase (355 aa).

Catalysis depends on Cys146, which acts as the Acyl-thioester intermediate. Substrate contacts are provided by Lys167 and Ser196. His239 serves as the catalytic Proton acceptor. Glu241 is an active-site residue. A substrate-binding site is contributed by Arg253.

This sequence belongs to the MetA family.

It is found in the cytoplasm. The catalysed reaction is L-homoserine + succinyl-CoA = O-succinyl-L-homoserine + CoA. Its pathway is amino-acid biosynthesis; L-methionine biosynthesis via de novo pathway; O-succinyl-L-homoserine from L-homoserine: step 1/1. Functionally, transfers a succinyl group from succinyl-CoA to L-homoserine, forming succinyl-L-homoserine. This Methylococcus capsulatus (strain ATCC 33009 / NCIMB 11132 / Bath) protein is Homoserine O-succinyltransferase.